Here is a 187-residue protein sequence, read N- to C-terminus: Nicotinamide-nucleotide adenylyltransferase (187 aa).

It belongs to the archaeal NMN adenylyltransferase family.

Its subcellular location is the cytoplasm. The enzyme catalyses beta-nicotinamide D-ribonucleotide + ATP + H(+) = diphosphate + NAD(+). It functions in the pathway cofactor biosynthesis; NAD(+) biosynthesis; NAD(+) from nicotinamide D-ribonucleotide: step 1/1. The chain is Nicotinamide-nucleotide adenylyltransferase from Thermococcus onnurineus (strain NA1).